The following is a 65-amino-acid chain: Photosystem II reaction center protein Z (65 aa).

2 helical membrane passes run 8-28 and 41-61; these read AVFA…VALA and YAGA…DSVV.

Belongs to the PsbZ family. As to quaternary structure, PSII is composed of 1 copy each of membrane proteins PsbA, PsbB, PsbC, PsbD, PsbE, PsbF, PsbH, PsbI, PsbJ, PsbK, PsbL, PsbM, PsbT, PsbX, PsbY, PsbZ, Psb30/Ycf12, at least 3 peripheral proteins of the oxygen-evolving complex and a large number of cofactors. It forms dimeric complexes.

It is found in the plastid. It localises to the cyanelle thylakoid membrane. Functionally, may control the interaction of photosystem II (PSII) cores with the light-harvesting antenna, regulates electron flow through the 2 photosystem reaction centers. PSII is a light-driven water plastoquinone oxidoreductase, using light energy to abstract electrons from H(2)O, generating a proton gradient subsequently used for ATP formation. This Cyanophora paradoxa protein is Photosystem II reaction center protein Z.